A 154-amino-acid chain; its full sequence is UPF0547 protein C16orf87 homolog (154 aa).

Residues 46–119 (HPEKAPSSTE…KHEEEREKQE (74 aa)) form a disordered region. Basic and acidic residues predominate over residues 68-84 (VRREKINSTVNKDLENR). Serine 91 carries the phosphoserine modification. The stretch at 104–132 (KSASAKKHEEEREKQEKEIDIYANLSDEK) forms a coiled coil. The span at 109-119 (KKHEEEREKQE) shows a compositional bias: basic and acidic residues.

Belongs to the UPF0547 family.

In Bos taurus (Bovine), this protein is UPF0547 protein C16orf87 homolog.